The sequence spans 196 residues: 3-isopropylmalate dehydratase small subunit (196 aa).

Belongs to the LeuD family. LeuD type 1 subfamily. In terms of assembly, heterodimer of LeuC and LeuD.

It catalyses the reaction (2R,3S)-3-isopropylmalate = (2S)-2-isopropylmalate. It functions in the pathway amino-acid biosynthesis; L-leucine biosynthesis; L-leucine from 3-methyl-2-oxobutanoate: step 2/4. In terms of biological role, catalyzes the isomerization between 2-isopropylmalate and 3-isopropylmalate, via the formation of 2-isopropylmaleate. The polypeptide is 3-isopropylmalate dehydratase small subunit (Streptococcus gordonii (strain Challis / ATCC 35105 / BCRC 15272 / CH1 / DL1 / V288)).